An 813-amino-acid polypeptide reads, in one-letter code: G-type lectin S-receptor-like serine/threonine-protein kinase LECRK1 (813 aa).

The first 19 residues, 1–19, serve as a signal peptide directing secretion; the sequence is MVALLLFPMLLQLLSPTCA. Residues 20–466 are Extracellular-facing; the sequence is QTQKNITLGS…NRKHWVLGSS (447 aa). The Bulb-type lectin domain maps to 22 to 149; that stretch reads QKNITLGSTL…DGTTKWQTFD (128 aa). N-linked (GlcNAc...) asparagine glycans are attached at residues asparagine 24, asparagine 57, asparagine 164, asparagine 168, asparagine 219, and asparagine 242. An EGF-like; atypical domain is found at 293 to 346; the sequence is PQNICHAIVSDVGSGVCGFNSYCTFDGTRNQIASCQCPPWYKFFDEQKKYKGCK. Cystine bridges form between cysteine 297-cysteine 315, cysteine 309-cysteine 327, cysteine 329-cysteine 345, cysteine 391-cysteine 413, and cysteine 395-cysteine 401. One can recognise a PAN domain in the interval 354-433; that stretch reads CDLEEATALA…NMADYVQRTV (80 aa). Residues asparagine 407 and asparagine 441 are each glycosylated (N-linked (GlcNAc...) asparagine). Residues 467–487 traverse the membrane as a helical segment; the sequence is LILGTSILVNFALISIFLFGT. The Cytoplasmic segment spans residues 488 to 813; it reads YCRITTKKNI…DPCSFISSLP (326 aa). Residues 523–797 enclose the Protein kinase domain; the sequence is AGFHEILGAG…KVTQMLDGAV (275 aa). ATP is bound by residues 529–537 and lysine 553; that span reads LGAGASGVV. Residue aspartate 647 is the Proton acceptor of the active site.

Belongs to the protein kinase superfamily. Ser/Thr protein kinase family. Interacts (via kinase domain) with ADF4. Expressed in plumules, radicles and panicles.

The protein resides in the membrane. It catalyses the reaction L-seryl-[protein] + ATP = O-phospho-L-seryl-[protein] + ADP + H(+). The enzyme catalyses L-threonyl-[protein] + ATP = O-phospho-L-threonyl-[protein] + ADP + H(+). Involved in innate immunity. Required for the expression of defense-related genes PR1A, LOX2 and CHS1 upon biotic stresses. Required for basal resistance to the fungal blast (M.grisea), bacterial blight (O.oryzae pv. oryzae, Xoo) and the herbivorous insect brown planthopper (N.lugens, BPH). May be involved in several defense signaling pathways. Involved in the promotion of seed germination. Required for the expression of alpha-amylase genes during seed germination. Involved in resistance against the brown planthopper (BPH). Member of the BPH3 (BPH resistance locus 3) cluster which contains LECRK1, LECRK2 and LECRK3. The protein is G-type lectin S-receptor-like serine/threonine-protein kinase LECRK1 of Oryza sativa subsp. indica (Rice).